Here is a 385-residue protein sequence, read N- to C-terminus: Isocitrate dehydrogenase [NAD] subunit beta, mitochondrial (385 aa).

Residues 1-34 (MAALSGVRWLTRALVSAGNPGAWRGLSTSAAAHA) constitute a mitochondrion transit peptide. Lys-199 is subject to N6-acetyllysine.

This sequence belongs to the isocitrate and isopropylmalate dehydrogenases family. Heterooligomer of subunits alpha (IDH3A), beta (IDH3B), and gamma (IDH3G) in the apparent ratio of 2:1:1. The heterodimer containing one IDH3A and one IDH3B subunit and the heterodimer containing one IDH3A and one IDH3G subunit assemble into a heterotetramer (which contains two subunits of IDH3A, one of IDH3B and one of IDH3G) and further into the heterooctamer.

Its subcellular location is the mitochondrion. With respect to regulation, the heterotetramer and the heterodimer composed of IDH3A and IDH3G subunits can be allosterically activated by citrate (CIT) or/and ADP, and the two activators can act independently or synergistically. The heterodimer composed of IDH3A and IDH3B subunits cannot be allosterically regulated and the allosteric regulation of the heterotetramer is through the IDH3G subunit and not the IDH3B subunit. The IDH3G subunit contains the allosteric site which consists of a CIT-binding site and an ADP-binding site, and the binding of CIT and ADP causes conformational changes at the allosteric site which are transmitted to the active site in the catalytic subunit (IDH3A) through a cascade of conformational changes at the heterodimer interface, leading to stabilization of the isocitrate-binding at the active site and thus activation of the enzyme. ATP can activate the heterotetramer and the heterodimer composed of IDH3A and IDH3G subunits at low concentrations but inhibits their activities at high concentrations, whereas ATP exhibits only inhibitory effect on the heterodimer composed of IDH3A and IDH3B subunits. Plays a structural role to facilitate the assembly and ensure the full activity of the enzyme catalyzing the decarboxylation of isocitrate (ICT) into alpha-ketoglutarate. The heterodimer composed of the alpha (IDH3A) and beta (IDH3B) subunits and the heterodimer composed of the alpha (IDH3A) and gamma (IDH3G) subunits, have considerable basal activity but the full activity of the heterotetramer (containing two subunits of IDH3A, one of IDH3B and one of IDH3G) requires the assembly and cooperative function of both heterodimers. The protein is Isocitrate dehydrogenase [NAD] subunit beta, mitochondrial (IDH3B) of Macaca fascicularis (Crab-eating macaque).